Reading from the N-terminus, the 560-residue chain is MSTHNEYDYIIIGAGSAGNVLATRLTEDADVSVLLLEAGGPDYRLDFRTQMPAALAFPLQGKRYNWAYKTDPEPFMNNRRMDCGRGKGLGGSSLINGMCYIRGNAMDYDNWASMPGLEDWTYLDCLPYFRKAETRDIGPNDYHGGEGPLRVTTPKAGNNELFAAMVEAGVQAGYPRTDDLNGYQQEGFGPMDRTVTPKGRRSSTARGYLDLAKPRPNLTIVTHALTDRILFSGKRAVGVQWLHNDQPQRATARREVLLCGGAIASPQILQRSGVGPADLLRSLDIDLVHHLPGVGANLQDHLEMYLQYECKKPVSLAPALKLYNQPAIGAEWLFLGTGIGASNQFEAGGFIRSDTEFDWPNLQYHFLPVAINYNGSNPIKAHSFQMHVGSMRSPSRGRIHVRSKDPREHPSILFNYMSHDQDWREFRAAIRITREIFAQPALAPYSGREISPGSALQTDAQIDAFVREHAETAYHPSCSNKMGHADDPMAVVDGQGRVHGLEGLRIVDASIMPQVVTGNLNAPTIMIAEKLADVIRGRTPLARSTAPYYKANGAPVRKQG.

Residue 8–37 (DYIIIGAGSAGNVLATRLTEDADVSVLLLE) participates in FAD binding. Residue His475 is the Proton acceptor of the active site.

It belongs to the GMC oxidoreductase family. Requires FAD as cofactor.

It catalyses the reaction choline + A = betaine aldehyde + AH2. It carries out the reaction betaine aldehyde + NAD(+) + H2O = glycine betaine + NADH + 2 H(+). The protein operates within amine and polyamine biosynthesis; betaine biosynthesis via choline pathway; betaine aldehyde from choline (cytochrome c reductase route): step 1/1. Involved in the biosynthesis of the osmoprotectant glycine betaine. Catalyzes the oxidation of choline to betaine aldehyde and betaine aldehyde to glycine betaine at the same rate. The chain is Oxygen-dependent choline dehydrogenase from Stenotrophomonas maltophilia (strain R551-3).